A 230-amino-acid polypeptide reads, in one-letter code: MAKEPLIRVLLIEDDPMVQEVNRMFVEKLSGFTIVGTTATGEEGMVKTRELQPDLILLDIFMPKQDGLSFIKQIREQYIDVDIIAVTAANDTKTIKTLLRYGVMDYLVKPFTFERLKAALTQYEEMFRKMQKEAELSQDSLDEMIKQKQAQANMDDLPKGLHAHTLQQVIERLEELDEPKSAEEIGRDVGLARVTVRRYLNYLESVGQVEMDLTYGSIGRPIQTYKLKQG.

Residues 8-124 (RVLLIEDDPM…RLKAALTQYE (117 aa)) form the Response regulatory domain. Asp-59 carries the 4-aspartylphosphate modification. The segment at residues 183–209 (EEIGRDVGLARVTVRRYLNYLESVGQV) is a DNA-binding region (H-T-H motif).

In terms of processing, phosphorylated by DctS.

It is found in the cytoplasm. In terms of biological role, member of the two-component regulatory system DctS/DctR. Essential for expression of DctP. This Halalkalibacterium halodurans (strain ATCC BAA-125 / DSM 18197 / FERM 7344 / JCM 9153 / C-125) (Bacillus halodurans) protein is Probable C4-dicarboxylate response regulator DctR (dctR).